The primary structure comprises 349 residues: MTIGIVSYGAYVPRYRIKVEEIARVWGDDANALKSGLMVYEKSVPDIDEDAATIAVEAARYAMTRSGVDPERIGAVYTGSESHPYAVKPTSTIVSQAIGATPNMTAADFEFACKAGTAAVQACMGLVSSGMIDLGMAIGADVSQGAPGDALEYTAAAGGVACLIGKKESELAAIIEDTYSFTTDTPDFWRREGMPYPEHGGRFTGEPGYFKHVTNGAKGLLNKLGTKPEDYDYAVFHQPNGKFPTKAAKTLGFTKAQIAPGLVVPKIGNTYSGSCLMGIAATLDQAKPGDRIFATAFGSGAGSDAFSITVTDRIEEIRNRAPTVSELIKDPIYIDYARYAKHKGKIRRS.

Positions 29 and 30 each coordinate (3S)-3-hydroxy-3-methylglutaryl-CoA. The active-site Proton donor/acceptor is the Glu-81. 2 residues coordinate (3S)-3-hydroxy-3-methylglutaryl-CoA: Cys-113 and Thr-154. Catalysis depends on Cys-113, which acts as the Acyl-thioester intermediate. Residue Arg-202 coordinates CoA. (3S)-3-hydroxy-3-methylglutaryl-CoA contacts are provided by Thr-204 and His-237. His-237 acts as the Proton donor/acceptor in catalysis. Lys-242 is a CoA binding site. (3S)-3-hydroxy-3-methylglutaryl-CoA is bound by residues Lys-246, Asn-269, and Ser-299.

This sequence belongs to the thiolase-like superfamily. Archaeal HMG-CoA synthase family. In terms of assembly, interacts with acetoacetyl-CoA thiolase that catalyzes the precedent step in the pathway and with a DUF35 protein. The acetoacetyl-CoA thiolase/HMG-CoA synthase complex channels the intermediate via a fused CoA-binding site, which allows for efficient coupling of the endergonic thiolase reaction with the exergonic HMGCS reaction.

It carries out the reaction acetoacetyl-CoA + acetyl-CoA + H2O = (3S)-3-hydroxy-3-methylglutaryl-CoA + CoA + H(+). Its pathway is metabolic intermediate biosynthesis; (R)-mevalonate biosynthesis; (R)-mevalonate from acetyl-CoA: step 2/3. In terms of biological role, catalyzes the condensation of acetyl-CoA with acetoacetyl-CoA to form 3-hydroxy-3-methylglutaryl-CoA (HMG-CoA). Functions in the mevalonate (MVA) pathway leading to isopentenyl diphosphate (IPP), a key precursor for the biosynthesis of isoprenoid compounds that are building blocks of archaeal membrane lipids. The sequence is that of Hydroxymethylglutaryl-CoA synthase from Methanosarcina barkeri (strain Fusaro / DSM 804).